Reading from the N-terminus, the 483-residue chain is Regulatory protein ViaA (483 aa).

The protein belongs to the ViaA family. Homodimer. Interacts with RavA.

The protein resides in the cytoplasm. In terms of biological role, component of the RavA-ViaA chaperone complex, which may act on the membrane to optimize the function of some of the respiratory chains. ViaA stimulates the ATPase activity of RavA. The protein is Regulatory protein ViaA of Salmonella paratyphi A (strain ATCC 9150 / SARB42).